A 94-amino-acid chain; its full sequence is Large ribosomal subunit protein bL27 (94 aa).

The propeptide occupies 1–10; sequence MQFLFNIQLF.

This sequence belongs to the bacterial ribosomal protein bL27 family. In terms of processing, the N-terminus is cleaved by ribosomal processing cysteine protease Prp.

This is Large ribosomal subunit protein bL27 from Fusobacterium nucleatum subsp. nucleatum (strain ATCC 25586 / DSM 15643 / BCRC 10681 / CIP 101130 / JCM 8532 / KCTC 2640 / LMG 13131 / VPI 4355).